Reading from the N-terminus, the 193-residue chain is Cysteine and glycine-rich protein 1 (193 aa).

The LIM zinc-binding 1 domain occupies cysteine 10–cysteine 61. The Nuclear localization signal signature appears at lysine 64–lysine 69. Serine 81 carries the post-translational modification Phosphoserine. An N6-acetyllysine modification is found at lysine 84. Lysine 91 is covalently cross-linked (Glycyl lysine isopeptide (Lys-Gly) (interchain with G-Cter in SUMO2)). N6-acetyllysine occurs at positions 112, 131, 137, and 161. In terms of domain architecture, LIM zinc-binding 2 spans cysteine 119–cysteine 170. Serine 192 carries the phosphoserine modification.

Interacts with ASCC1; ASCC2 and TRIP4.

The protein localises to the nucleus. In terms of biological role, could play a role in neuronal development. The sequence is that of Cysteine and glycine-rich protein 1 (CSRP1) from Homo sapiens (Human).